A 261-amino-acid polypeptide reads, in one-letter code: Hemin import ATP-binding protein HmuV (261 aa).

Residues 2–243 form the ABC transporter domain; that stretch reads LCANNVSAQI…ALLKRVYNIN (242 aa). Residue 34-41 participates in ATP binding; it reads GPNGAGKS.

It belongs to the ABC transporter superfamily. Heme (hemin) importer (TC 3.A.1.14.5) family. The complex is composed of two ATP-binding proteins (HmuV), two transmembrane proteins (HmuU) and a solute-binding protein (HmuT).

Its subcellular location is the cell inner membrane. Its function is as follows. Part of the ABC transporter complex HmuTUV involved in hemin import. Responsible for energy coupling to the transport system. The sequence is that of Hemin import ATP-binding protein HmuV from Pseudoalteromonas translucida (strain TAC 125).